We begin with the raw amino-acid sequence, 182 residues long: Peptide deformylase (182 aa).

Residues C100 and H142 each coordinate Fe cation. The active site involves E143. H146 is a Fe cation binding site.

It belongs to the polypeptide deformylase family. Fe(2+) serves as cofactor.

The enzyme catalyses N-terminal N-formyl-L-methionyl-[peptide] + H2O = N-terminal L-methionyl-[peptide] + formate. Its function is as follows. Removes the formyl group from the N-terminal Met of newly synthesized proteins. Requires at least a dipeptide for an efficient rate of reaction. N-terminal L-methionine is a prerequisite for activity but the enzyme has broad specificity at other positions. This is Peptide deformylase from Bartonella bacilliformis (strain ATCC 35685 / KC583 / Herrer 020/F12,63).